Consider the following 1095-residue polypeptide: Solute carrier family 12 member 1 (1095 aa).

The Cytoplasmic segment spans residues methionine 1–phenylalanine 173. The RFXV motif signature appears at arginine 16–valine 19. A disordered region spans residues histidine 26–serine 45. Phosphoserine is present on residues serine 57 and serine 87. Phosphothreonine is present on residues threonine 91, threonine 96, threonine 101, and threonine 114. Phosphoserine is present on serine 116. A Phosphoserine; by AMPK modification is found at serine 126. Serine 144 carries the post-translational modification Phosphoserine. The chain crosses the membrane as a helical span at residues glycine 174 to isoleucine 194. At arginine 195–serine 197 the chain is on the extracellular side. Residues tryptophan 198 to valine 218 traverse the membrane as a helical segment. At threonine 219 to serine 255 the chain is on the cytoplasmic side. The chain crosses the membrane as a helical span at residues isoleucine 256 to alanine 276. The Extracellular portion of the chain corresponds to glutamate 277–arginine 298. The helical transmembrane segment at isoleucine 299 to glutamate 319 threads the bilayer. The Cytoplasmic segment spans residues alanine 320–glutamine 323. The chain crosses the membrane as a helical span at residues valine 324–proline 344. The Extracellular segment spans residues serine 345–glycine 375. Residues phenylalanine 376–isoleucine 396 form a helical membrane-spanning segment. Topologically, residues serine 397–leucine 413 are cytoplasmic. A helical membrane pass occupies residues alanine 414–valine 434. At arginine 435–leucine 546 the chain is on the extracellular side. N-linked (GlcNAc...) asparagine glycosylation is found at asparagine 442 and asparagine 452. Helical transmembrane passes span threonine 547 to isoleucine 567 and serine 568 to alanine 588. Residues lysine 589–serine 605 are Extracellular-facing. Residues leucine 606–isoleucine 626 traverse the membrane as a helical segment. Residues threonine 627–serine 1095 lie on the Cytoplasmic side of the membrane.

It belongs to the SLC12A transporter family. As to quaternary structure, when phosphorylated, interacts with PPP3CB. In terms of processing, phosphorylated at Ser-87, Thr-96 and Thr-101 by OXSR1/OSR1 and STK39/SPAK downstream of WNK kinases (WNK1, WNK2, WNK3 or WNK4), promoting its activity. Expressed predominantly in kidney (at protein level).

The protein resides in the apical cell membrane. The enzyme catalyses K(+)(out) + 2 chloride(out) + Na(+)(out) = K(+)(in) + 2 chloride(in) + Na(+)(in). With respect to regulation, activated following phosphorylation by OXSR1/OSR1 and STK39/SPAK downstream of WNK kinases (WNK1, WNK2, WNK3 or WNK4). In terms of biological role, renal sodium, potassium and chloride ion cotransporter that mediates the transepithelial NaCl reabsorption in the thick ascending limb and plays an essential role in the urinary concentration and volume regulation. Electrically silent transporter system. The protein is Solute carrier family 12 member 1 (Slc12a1) of Rattus norvegicus (Rat).